The primary structure comprises 133 residues: UPF0102 protein Fnod_1509 (133 aa).

This sequence belongs to the UPF0102 family.

In Fervidobacterium nodosum (strain ATCC 35602 / DSM 5306 / Rt17-B1), this protein is UPF0102 protein Fnod_1509.